The following is a 513-amino-acid chain: Bifunctional purine biosynthesis protein PurH (513 aa).

The MGS-like domain maps to 1-145; that stretch reads MTKKAIISVY…KNFKYITVII (145 aa).

This sequence belongs to the PurH family.

It carries out the reaction (6R)-10-formyltetrahydrofolate + 5-amino-1-(5-phospho-beta-D-ribosyl)imidazole-4-carboxamide = 5-formamido-1-(5-phospho-D-ribosyl)imidazole-4-carboxamide + (6S)-5,6,7,8-tetrahydrofolate. The enzyme catalyses IMP + H2O = 5-formamido-1-(5-phospho-D-ribosyl)imidazole-4-carboxamide. The protein operates within purine metabolism; IMP biosynthesis via de novo pathway; 5-formamido-1-(5-phospho-D-ribosyl)imidazole-4-carboxamide from 5-amino-1-(5-phospho-D-ribosyl)imidazole-4-carboxamide (10-formyl THF route): step 1/1. It participates in purine metabolism; IMP biosynthesis via de novo pathway; IMP from 5-formamido-1-(5-phospho-D-ribosyl)imidazole-4-carboxamide: step 1/1. This is Bifunctional purine biosynthesis protein PurH from Caldicellulosiruptor saccharolyticus (strain ATCC 43494 / DSM 8903 / Tp8T 6331).